We begin with the raw amino-acid sequence, 2222 residues long: DNA polymerase epsilon catalytic subunit A (2222 aa).

The disordered stretch occupies residues 90–110 (ETLSSGSNGGGNSNDGERVTT). Zn(2+) contacts are provided by Cys-2108, Cys-2111, Cys-2130, and Cys-2133. The segment at 2108-2133 (CEYCFFISDIDFCKAAPESIFSCVRC) adopts a CysA-type zinc-finger fold. Cys-2164, Cys-2167, Cys-2179, and Cys-2181 together coordinate [4Fe-4S] cluster. A CysB motif motif is present at residues 2164 to 2181 (CSRCHKVKRDYMSAHCPC).

It belongs to the DNA polymerase type-B family. As to quaternary structure, DNA polymerase epsilon is a heterotetramer consisting of POL2, DPB2, DPB3 and DPB4. [4Fe-4S] cluster serves as cofactor.

It is found in the nucleus. It catalyses the reaction DNA(n) + a 2'-deoxyribonucleoside 5'-triphosphate = DNA(n+1) + diphosphate. Functionally, catalytic component of the DNA polymerase epsilon complex which participates in chromosomal DNA replication. Required during synthesis of the leading DNA strands at the replication fork, binds at/or near replication origins and moves along DNA with the replication fork. Has 3'-5' proofreading exonuclease activity that corrects errors arising during DNA replication. In Saccharomyces cerevisiae (strain ATCC 204508 / S288c) (Baker's yeast), this protein is DNA polymerase epsilon catalytic subunit A (POL2).